The chain runs to 624 residues: Glutaminase 2 (624 aa).

Residues 1–20 (MDTQPIRLPSVAGATRSAGY) form a disordered region. The segment at 43–325 (GELADYIPEL…LSARFDLHML (283 aa)) is glutaminase. Serine 85, asparagine 134, glutamate 178, asparagine 185, tyrosine 209, tyrosine 261, and valine 279 together coordinate substrate. One can recognise an STAS domain in the interval 355–466 (QQILDERHSD…ALLDDAIEWA (112 aa)). 491–608 (LLAELDTDEI…IMRNLAAILA (118 aa)) is an a nucleoside 3',5'-cyclic phosphate binding site.

It belongs to the glutaminase family. As to quaternary structure, homotetramer.

It catalyses the reaction L-glutamine + H2O = L-glutamate + NH4(+). This is Glutaminase 2 (glsA2) from Bradyrhizobium diazoefficiens (strain JCM 10833 / BCRC 13528 / IAM 13628 / NBRC 14792 / USDA 110).